A 404-amino-acid polypeptide reads, in one-letter code: MLGSTGSIGTQTLEIVSELPDKFKVVALSAGRNIDLLTEQVSQHKPEVIAIEDENLLTDLKNNINNLGISNPPIVLGGREAINSVAAWDSADTVITGIVGCAGLIPTMSAIKAGKNIALANKETLIAAGSVVIPALKESKSRLLPADSEHSAIFQCIQGLPNYENADFSTGQIPNGLKAIHLTASGGAFRDWEVEDLKNVTVEDATSHPNWSMGRKITVDSATLMNKGLEVIEAHYLFGTSYENIEIAIHPQSIIHSMIEMEDSSVLAQLGWPDMKLPILYAMSWPERFKTNWKRFNLTEIGQLTFKKPDEVKYPCMGLAYSAGKCSGTMPAVLNAANEMAVDQFLKEKISFQEIPIFINKTCESHLNKINLNPKLEDILEVDNWARIFVQEEIKKGKKYINVG.

8 residues coordinate NADPH: threonine 5, glycine 6, serine 7, isoleucine 8, glycine 31, arginine 32, asparagine 33, and asparagine 121. 1-deoxy-D-xylulose 5-phosphate is bound at residue lysine 122. Glutamate 123 is an NADPH binding site. Residue aspartate 147 coordinates Mn(2+). 1-deoxy-D-xylulose 5-phosphate-binding residues include serine 148, glutamate 149, serine 185, and histidine 208. A Mn(2+)-binding site is contributed by glutamate 149. Glycine 214 provides a ligand contact to NADPH. Residues serine 221, asparagine 226, lysine 227, and glutamate 230 each coordinate 1-deoxy-D-xylulose 5-phosphate. Glutamate 230 serves as a coordination point for Mn(2+).

The protein belongs to the DXR family. Mg(2+) is required as a cofactor. The cofactor is Mn(2+).

It catalyses the reaction 2-C-methyl-D-erythritol 4-phosphate + NADP(+) = 1-deoxy-D-xylulose 5-phosphate + NADPH + H(+). It functions in the pathway isoprenoid biosynthesis; isopentenyl diphosphate biosynthesis via DXP pathway; isopentenyl diphosphate from 1-deoxy-D-xylulose 5-phosphate: step 1/6. In terms of biological role, catalyzes the NADPH-dependent rearrangement and reduction of 1-deoxy-D-xylulose-5-phosphate (DXP) to 2-C-methyl-D-erythritol 4-phosphate (MEP). In Prochlorococcus marinus subsp. pastoris (strain CCMP1986 / NIES-2087 / MED4), this protein is 1-deoxy-D-xylulose 5-phosphate reductoisomerase.